Consider the following 560-residue polypeptide: Serine/threonine-protein kinase TOS3 (560 aa).

The region spanning 50–344 (FEILATLGNG…LADIKVHPFM (295 aa)) is the Protein kinase domain. Residues 56 to 64 (LGNGQYGKV) and Lys79 contribute to the ATP site. Catalysis depends on Asp189, which acts as the Proton acceptor.

This sequence belongs to the protein kinase superfamily. Ser/Thr protein kinase family. Autophosphorylated.

It catalyses the reaction L-seryl-[protein] + ATP = O-phospho-L-seryl-[protein] + ADP + H(+). It carries out the reaction L-threonyl-[protein] + ATP = O-phospho-L-threonyl-[protein] + ADP + H(+). In terms of biological role, one of the three SNF1 protein kinases (with SAK1 and ELM1) which are required for growth on nonfermentable carbon sources and nonpreferred sugars and for response to environmental stress. Activates SNF1 by phosphorylation of its activation-loop 'Thr-210'. Required for the regulation by SNF1 of the transcription of a large set of genes, the modification the activity of metabolic enzymes, and the control of various nutrient-responsive cellular developmental processes. Also phosphorylates GAL83, MIG1 and SIP2. The sequence is that of Serine/threonine-protein kinase TOS3 (TOS3) from Saccharomyces cerevisiae (strain YJM789) (Baker's yeast).